A 307-amino-acid polypeptide reads, in one-letter code: MANITAAMVKDLREKTGAGMMDCKSALNETAGDIEAAVDWLRKKGLAKAAKKAGRVAAEGLVAVESAGRHAAVVEVNSETDFVARNDSFQAFVREAAKVALNAEGGVEALEAAHFPGSQTTVKDRLQELIATIGENMTLRRTAKLTVEKGVIATYVHSQVSEGLGKIGVLVALESDGDVGFLSTLGRQIAMHVAATNPLALDATGIDQATIERESNILREKNAGKPDHVLAKIVESGLKSYYKEVTLLEQPFVHDTSKTVSQVLKEAEGKAGGPVKLAGFVRYALGEGIEKEEGPDFASEVAAAAKG.

Residues Thr-80–Val-83 form an involved in Mg(2+) ion dislocation from EF-Tu region.

Belongs to the EF-Ts family.

Its subcellular location is the cytoplasm. Associates with the EF-Tu.GDP complex and induces the exchange of GDP to GTP. It remains bound to the aminoacyl-tRNA.EF-Tu.GTP complex up to the GTP hydrolysis stage on the ribosome. This is Elongation factor Ts from Methylobacterium nodulans (strain LMG 21967 / CNCM I-2342 / ORS 2060).